Reading from the N-terminus, the 176-residue chain is Ribosome maturation factor RimM (176 aa).

The region spanning 93-166 (EGEYYHADLI…RVVIELPAEI (74 aa)) is the PRC barrel domain.

It belongs to the RimM family. Binds ribosomal protein uS19.

The protein resides in the cytoplasm. In terms of biological role, an accessory protein needed during the final step in the assembly of 30S ribosomal subunit, possibly for assembly of the head region. Essential for efficient processing of 16S rRNA. May be needed both before and after RbfA during the maturation of 16S rRNA. It has affinity for free ribosomal 30S subunits but not for 70S ribosomes. The protein is Ribosome maturation factor RimM of Rhodopseudomonas palustris (strain BisB18).